We begin with the raw amino-acid sequence, 350 residues long: Nuclear pore complex-interacting protein family member A1 (350 aa).

A disordered region spans residues 306-325 (KTPPECLLTPLPPSAPPSVD).

It belongs to the NPIP family. May associate with the nuclear pore complex. In terms of tissue distribution, widely expressed.

Its subcellular location is the nucleus. The protein localises to the nuclear pore complex. It localises to the nucleus membrane. The protein is Nuclear pore complex-interacting protein family member A1 (NPIPA1) of Homo sapiens (Human).